Here is a 229-residue protein sequence, read N- to C-terminus: 2-C-methyl-D-erythritol 4-phosphate cytidylyltransferase (229 aa).

Belongs to the IspD/TarI cytidylyltransferase family. IspD subfamily. As to quaternary structure, homodimer.

It carries out the reaction 2-C-methyl-D-erythritol 4-phosphate + CTP + H(+) = 4-CDP-2-C-methyl-D-erythritol + diphosphate. It participates in isoprenoid biosynthesis; isopentenyl diphosphate biosynthesis via DXP pathway; isopentenyl diphosphate from 1-deoxy-D-xylulose 5-phosphate: step 2/6. Functionally, catalyzes the formation of 4-diphosphocytidyl-2-C-methyl-D-erythritol from CTP and 2-C-methyl-D-erythritol 4-phosphate (MEP). This chain is 2-C-methyl-D-erythritol 4-phosphate cytidylyltransferase, found in Wigglesworthia glossinidia brevipalpis.